Consider the following 250-residue polypeptide: 7-cyano-7-deazaguanine synthase (250 aa).

Position 28–38 (28–38 (LSGGLDSATCV)) interacts with ATP. Residues Cys213, Cys226, Cys229, and Cys232 each contribute to the Zn(2+) site.

Belongs to the QueC family. It depends on Zn(2+) as a cofactor.

The enzyme catalyses 7-carboxy-7-deazaguanine + NH4(+) + ATP = 7-cyano-7-deazaguanine + ADP + phosphate + H2O + H(+). It participates in purine metabolism; 7-cyano-7-deazaguanine biosynthesis. Catalyzes the ATP-dependent conversion of 7-carboxy-7-deazaguanine (CDG) to 7-cyano-7-deazaguanine (preQ(0)). The sequence is that of 7-cyano-7-deazaguanine synthase from Rhodopirellula baltica (strain DSM 10527 / NCIMB 13988 / SH1).